The primary structure comprises 305 residues: Thioredoxin reductase (305 aa).

Residue 28-35 (LGIETSSQ) participates in FAD binding. Cysteine 129 and cysteine 132 are oxidised to a cystine. Residue 272 to 281 (DCCDWIYRQA) coordinates FAD.

The protein belongs to the class-II pyridine nucleotide-disulfide oxidoreductase family. As to quaternary structure, homodimer. FAD is required as a cofactor.

The protein localises to the cytoplasm. The enzyme catalyses [thioredoxin]-dithiol + NADP(+) = [thioredoxin]-disulfide + NADPH + H(+). This Spironucleus barkhanus protein is Thioredoxin reductase (TRXB).